Reading from the N-terminus, the 396-residue chain is Elongation factor Tu (396 aa).

The tr-type G domain occupies 10 to 206 (KPHCNIGTIG…NVDEYIPQPE (197 aa)). The tract at residues 19 to 26 (GHVDHGKT) is G1. Residue 19–26 (GHVDHGKT) coordinates GTP. T26 is a binding site for Mg(2+). Positions 60–64 (GITIS) are G2. A G3 region spans residues 81 to 84 (DCPG). GTP-binding positions include 81–85 (DCPGH) and 136–139 (NKCD). A G4 region spans residues 136-139 (NKCD). Residues 174-176 (SAL) form a G5 region.

Belongs to the TRAFAC class translation factor GTPase superfamily. Classic translation factor GTPase family. EF-Tu/EF-1A subfamily. As to quaternary structure, monomer.

Its subcellular location is the cytoplasm. It carries out the reaction GTP + H2O = GDP + phosphate + H(+). Its function is as follows. GTP hydrolase that promotes the GTP-dependent binding of aminoacyl-tRNA to the A-site of ribosomes during protein biosynthesis. The chain is Elongation factor Tu from Bradyrhizobium diazoefficiens (strain JCM 10833 / BCRC 13528 / IAM 13628 / NBRC 14792 / USDA 110).